The chain runs to 780 residues: Ino eighty subunit 1 (780 aa).

2 disordered regions span residues Met-1–His-25 and Ala-563–Asn-780. The segment covering Ala-563–Ala-584 has biased composition (basic and acidic residues). A compositionally biased stretch (basic residues) spans Ser-600 to Ala-613. Positions Arg-614 to Ser-635 are enriched in low complexity. Acidic residues-rich tracts occupy residues Leu-676–Asp-686 and Asp-723–Asp-751.

As to quaternary structure, component of the chromatin-remodeling INO80 complex.

It localises to the nucleus. Its function is as follows. Probably involved in transcription regulation via its interaction with the INO80 complex, a chromatin-remodeling complex. The sequence is that of Ino eighty subunit 1 from Emericella nidulans (strain FGSC A4 / ATCC 38163 / CBS 112.46 / NRRL 194 / M139) (Aspergillus nidulans).